The primary structure comprises 91 residues: Large ribosomal subunit protein bL31B (91 aa).

This sequence belongs to the bacterial ribosomal protein bL31 family. Type B subfamily. As to quaternary structure, part of the 50S ribosomal subunit.

This chain is Large ribosomal subunit protein bL31B, found in Neisseria meningitidis serogroup A / serotype 4A (strain DSM 15465 / Z2491).